The sequence spans 459 residues: Ribulose bisphosphate carboxylase (459 aa).

A substrate-binding site is contributed by Asn111. Lys166 acts as the Proton acceptor in catalysis. A substrate-binding site is contributed by Lys168. Positions 191, 193, and 194 each coordinate Mg(2+). Lys191 is modified (N6-carboxylysine). Catalysis depends on His287, which acts as the Proton acceptor. Arg288, His321, and Ser368 together coordinate substrate.

Belongs to the RuBisCO large chain family. Type II subfamily. Homodimer. Mg(2+) is required as a cofactor.

It carries out the reaction 2 (2R)-3-phosphoglycerate + 2 H(+) = D-ribulose 1,5-bisphosphate + CO2 + H2O. The enzyme catalyses D-ribulose 1,5-bisphosphate + O2 = 2-phosphoglycolate + (2R)-3-phosphoglycerate + 2 H(+). Functionally, ruBisCO catalyzes two reactions: the carboxylation of D-ribulose 1,5-bisphosphate, the primary event in carbon dioxide fixation, as well as the oxidative fragmentation of the pentose substrate. Both reactions occur simultaneously and in competition at the same active site. In Albidiferax ferrireducens (strain ATCC BAA-621 / DSM 15236 / T118) (Rhodoferax ferrireducens), this protein is Ribulose bisphosphate carboxylase.